We begin with the raw amino-acid sequence, 541 residues long: Chaperonin GroEL (541 aa).

Residues 29-32 (TLGP), 86-90 (DGTTT), Gly-413, 480-482 (NAA), and Asp-496 each bind ATP.

The protein belongs to the chaperonin (HSP60) family. As to quaternary structure, forms a cylinder of 14 subunits composed of two heptameric rings stacked back-to-back. Interacts with the co-chaperonin GroES.

Its subcellular location is the cytoplasm. The catalysed reaction is ATP + H2O + a folded polypeptide = ADP + phosphate + an unfolded polypeptide.. Together with its co-chaperonin GroES, plays an essential role in assisting protein folding. The GroEL-GroES system forms a nano-cage that allows encapsulation of the non-native substrate proteins and provides a physical environment optimized to promote and accelerate protein folding. The protein is Chaperonin GroEL of Gardnerella vaginalis.